Consider the following 955-residue polypeptide: 4-alpha-glucanotransferase DPE2 (955 aa).

N-acetylmethionine is present on methionine 1. CBM20 domains follow at residues lysine 13–serine 122 and serine 157–glycine 270. The disordered stretch occupies residues serine 925–proline 955.

Belongs to the disproportionating enzyme family.

Its subcellular location is the cytoplasm. It localises to the cytosol. The catalysed reaction is Transfers a segment of a (1-&gt;4)-alpha-D-glucan to a new position in an acceptor, which may be glucose or a (1-&gt;4)-alpha-D-glucan.. Inactivated in response to cold stress. Functionally, cytosolic alpha-glucanotransferase essential for the cytosolic metabolism of maltose, an intermediate on the pathway by which starch is converted to sucrose in leaves at night. Metabolizes maltose exported from the chloroplast and is specific for beta-maltose. May play a role in freezing tolerance. Temperature drop induces inactivation of DPE2 that leads to rapid accumulation of maltose, a solute that protects cells from freezing damage. The chain is 4-alpha-glucanotransferase DPE2 (DPE2) from Arabidopsis thaliana (Mouse-ear cress).